A 142-amino-acid polypeptide reads, in one-letter code: MVLSAADKGNVKTVFGKIGGHAEEYGAETLQRMFQTFPQTKTYFPHFDLQPGSAQIKAHGKKVAAALVEAANHIDDIAGALSKLSDLHAQKLRVDPVNFKFLGHCFLVVLAIHHPSLLTPEVHASMDKFLCAVATVLTAKYR.

The region spanning 2–142 (VLSAADKGNV…VATVLTAKYR (141 aa)) is the Globin domain. H59 provides a ligand contact to O2. H88 is a binding site for heme b.

It belongs to the globin family. In terms of assembly, heterotetramer of two alpha chains and two beta chains. Red blood cells.

Involved in oxygen transport from the lung to the various peripheral tissues. In Anseranas semipalmata (Magpie goose), this protein is Hemoglobin subunit alpha-A (HBAA).